Consider the following 483-residue polypeptide: GTPase Der (483 aa).

2 EngA-type G domains span residues 3–167 (FTLA…GEER) and 212–387 (LRIA…EIWN). Residues 9 to 16 (GRPNVGKS), 56 to 60 (DTAGL), 119 to 122 (NKAE), 218 to 225 (GRPNAGKS), 265 to 269 (DTAGM), and 330 to 333 (NKWD) each bind GTP. One can recognise a KH-like domain in the interval 388–472 (RRISTGRLNR…PIRLSLRTSD (85 aa)).

Belongs to the TRAFAC class TrmE-Era-EngA-EngB-Septin-like GTPase superfamily. EngA (Der) GTPase family. Associates with the 50S ribosomal subunit.

In terms of biological role, GTPase that plays an essential role in the late steps of ribosome biogenesis. This chain is GTPase Der, found in Brucella ovis (strain ATCC 25840 / 63/290 / NCTC 10512).